A 65-amino-acid polypeptide reads, in one-letter code: Small ribosomal subunit protein bS21 (65 aa).

The tract at residues 45-65 (GRLKRSRSKRRAQRANEERNS) is disordered. The span at 48-57 (KRSRSKRRAQ) shows a compositional bias: basic residues.

Belongs to the bacterial ribosomal protein bS21 family.

This chain is Small ribosomal subunit protein bS21, found in Chlorobium luteolum (strain DSM 273 / BCRC 81028 / 2530) (Pelodictyon luteolum).